Reading from the N-terminus, the 119-residue chain is Short coiled-coil protein A (119 aa).

Acidic residues predominate over residues 1–10; sequence MEGDVDEDDG. Residues 1–26 form a disordered region; that stretch reads MEGDVDEDDGTFTNISLADDSADGEP. Residues 48 to 95 adopt a coiled-coil conformation; the sequence is MENQVEQEEKTRLINQVLELQHTLEDLSARVDAVKEENLKLKSENQVL.

This sequence belongs to the SCOC family.

Its subcellular location is the golgi apparatus membrane. It localises to the golgi apparatus. It is found in the trans-Golgi network. The protein localises to the cytoplasm. The protein resides in the cytosol. Functionally, positive regulator of amino acid starvation-induced autophagy. This Danio rerio (Zebrafish) protein is Short coiled-coil protein A (scoca).